The primary structure comprises 328 residues: D-cysteine desulfhydrase (328 aa).

N6-(pyridoxal phosphate)lysine is present on lysine 51.

The protein belongs to the ACC deaminase/D-cysteine desulfhydrase family. In terms of assembly, homodimer. Pyridoxal 5'-phosphate is required as a cofactor.

It carries out the reaction D-cysteine + H2O = hydrogen sulfide + pyruvate + NH4(+) + H(+). Functionally, catalyzes the alpha,beta-elimination reaction of D-cysteine and of several D-cysteine derivatives. It could be a defense mechanism against D-cysteine. The protein is D-cysteine desulfhydrase of Salmonella paratyphi B (strain ATCC BAA-1250 / SPB7).